The primary structure comprises 322 residues: Peptidase 1 (322 aa).

A signal peptide spans Met-1–Ala-18. The propeptide occupies Tyr-19 to Gly-99. Cys-131 and Cys-171 are disulfide-bonded. Residue Cys-134 is part of the active site. Residue Asn-152 is glycosylated (N-linked (GlcNAc...) asparagine). Residues His-270 and Asn-290 contribute to the active site.

Belongs to the peptidase C1 family. As to expression, expressed in the gut.

It is found in the secreted. The enzyme catalyses Broad endopeptidase specificity.. Probable thiol protease. In Psoroptes ovis (Sheep scab mite), this protein is Peptidase 1.